The chain runs to 448 residues: Trigger factor (448 aa).

The region spanning 172–257 (GDRVTVDFVG…MKKIEWPHLP (86 aa)) is the PPIase FKBP-type domain.

Belongs to the FKBP-type PPIase family. Tig subfamily.

The protein resides in the cytoplasm. It carries out the reaction [protein]-peptidylproline (omega=180) = [protein]-peptidylproline (omega=0). In terms of biological role, involved in protein export. Acts as a chaperone by maintaining the newly synthesized protein in an open conformation. Functions as a peptidyl-prolyl cis-trans isomerase. The chain is Trigger factor from Burkholderia ambifaria (strain ATCC BAA-244 / DSM 16087 / CCUG 44356 / LMG 19182 / AMMD) (Burkholderia cepacia (strain AMMD)).